The chain runs to 216 residues: Guanylate kinase (216 aa).

A Guanylate kinase-like domain is found at G11–L189. Position 18-25 (G18–G25) interacts with ATP.

Belongs to the guanylate kinase family.

Its subcellular location is the cytoplasm. The catalysed reaction is GMP + ATP = GDP + ADP. Essential for recycling GMP and indirectly, cGMP. The chain is Guanylate kinase from Clostridium perfringens (strain ATCC 13124 / DSM 756 / JCM 1290 / NCIMB 6125 / NCTC 8237 / Type A).